The sequence spans 418 residues: MREVVSLNVGQAGGQIANSCWELYCLEHGIQPDGYLTEERKAADPDQGFNTFFSETGQGKYVPRTIYCDLEPNVVDEVRTGPYRALFHPEQMITGKEDASNNYARGHYTVGKEMIDQCLDKVRRVADNCSGLQGFLVFHSFGGGQGSGFGALLMERLSVDYGKKTKLEFCVYPAPQNATSVVEPYNSILTTHTTLEHSDVQFMVDNEAIYDICRRNLGIERPSYENSNRLMAQGQSPITAIMLLFDCALNVDLNEFQTNLVPYPRIHFPLASYSPVVSAGKASHESNSVMEVTIVCFEPNNQMVKCDPRNGKYMATCLLYRGDVVPKDVHAVAATLKTKRTVQFVDLQPTGFKIGICYQPPTMVPNGDLAKVNRACMLSNTTAISEAWTALSHKFDLIYSKRAFVHWYVGEGMEEGEF.

The GTP site is built by Q11, E71, S140, G144, T179, N206, and N228. A Mg(2+)-binding site is contributed by E71. The active site involves E255.

Belongs to the tubulin family. As to quaternary structure, dimer of alpha and beta chains. A typical microtubule is a hollow water-filled tube with an outer diameter of 25 nm and an inner diameter of 15 nM. Alpha-beta heterodimers associate head-to-tail to form protofilaments running lengthwise along the microtubule wall with the beta-tubulin subunit facing the microtubule plus end conferring a structural polarity. Microtubules usually have 13 protofilaments but different protofilament numbers can be found in some organisms and specialized cells. Mg(2+) serves as cofactor.

The protein localises to the cytoplasm. It localises to the cytoskeleton. The catalysed reaction is GTP + H2O = GDP + phosphate + H(+). Tubulin is the major constituent of microtubules, a cylinder consisting of laterally associated linear protofilaments composed of alpha- and beta-tubulin heterodimers. Microtubules grow by the addition of GTP-tubulin dimers to the microtubule end, where a stabilizing cap forms. Below the cap, tubulin dimers are in GDP-bound state, owing to GTPase activity of alpha-tubulin. The chain is Tubulin alpha chain (TUB1) from Ajellomyces capsulatus (Darling's disease fungus).